The primary structure comprises 96 residues: Co-chaperonin GroES (96 aa).

The protein belongs to the GroES chaperonin family. Heptamer of 7 subunits arranged in a ring. Interacts with the chaperonin GroEL.

It is found in the cytoplasm. In terms of biological role, together with the chaperonin GroEL, plays an essential role in assisting protein folding. The GroEL-GroES system forms a nano-cage that allows encapsulation of the non-native substrate proteins and provides a physical environment optimized to promote and accelerate protein folding. GroES binds to the apical surface of the GroEL ring, thereby capping the opening of the GroEL channel. This is Co-chaperonin GroES from Haemophilus influenzae (strain ATCC 51907 / DSM 11121 / KW20 / Rd).